A 302-amino-acid chain; its full sequence is Haloalkane dehalogenase (302 aa).

Positions 48–150 constitute an AB hydrolase-1 domain; the sequence is PVLLMHGEPS…AGLVIANTGL (103 aa). The active-site Nucleophile is the aspartate 123. Aspartate 249 acts as the Proton donor in catalysis. Catalysis depends on histidine 278, which acts as the Proton acceptor.

The protein belongs to the haloalkane dehalogenase family. Type 1 subfamily. As to quaternary structure, monomer.

The enzyme catalyses 1-haloalkane + H2O = a halide anion + a primary alcohol + H(+). Functionally, catalyzes hydrolytic cleavage of carbon-halogen bonds in halogenated aliphatic compounds, leading to the formation of the corresponding primary alcohols, halide ions and protons. In Caulobacter sp. (strain K31), this protein is Haloalkane dehalogenase.